A 266-amino-acid polypeptide reads, in one-letter code: MPSYLITGGSRGLGYAWLKHLSSNPQNTVIGLVRDKSSPHSHPLADRLTNVHHVCADITDPKALQTAAEQVRAITGGGLDVLINNAAILTPTSAFTPITDLSPGVLERDILQSCRTNVVGVAHTVNAFLPLIRKGRAKKVITISSLLADPDLVRNFALDNAMPYAISKAAANLLMAKYHASLGATEGILFMAISPGAVSKPDTAPSEGEAEGRRRMAAKLQAYAPHFSRPMTMEESVRRQLEVIENATVELHGGAFVSHLGNKQWL.

3 residues coordinate NADP(+): L13, D57, and N85. Active-site proton donor residues include S145 and Y164. NADP(+) contacts are provided by Y164, K168, and V198. Catalysis depends on K168, which acts as the Lowers pKa of active site Tyr.

Belongs to the short-chain dehydrogenases/reductases (SDR) family.

It functions in the pathway secondary metabolite biosynthesis. Functionally, short-chain dehydrogenase/reductase; part of the gene cluster that mediates the biosynthesis of the tetrahydroxanthone dimer secalonic acid D. The pathway begins with the synthesis of atrochrysone thioester by the polyketide synthase AacuL. The atrochrysone carboxyl ACP thioesterase AacuM then breaks the thioester bond and releases the atrochrysone carboxylic acid from AacuL. Atrochrysone carboxylic acid is decarboxylated by the decarboxylase AacuI, and oxidized by the anthrone oxygenase AacuG to yield emodin. Emodin is then reduced to emodin hydroquinone by a yet unidentified oxidoreductase. A-ring reduction by the short chain dehydrogenase AacuN, dehydration by the scytalone dehydratase-like protein AacuK and probable spontaneous re-oxidation, results in overall deoxygenation to chrysophanol. Baeyer-Villiger oxidation by the Baeyer-Villiger monooxygenase (BVMO) AacuH then yields monodictyphenone. Monodictyphenone is transformed into compounds with the tetrahydroxanthone skeleton via methylesterification by the methyltransferase AacuQ, followed by the action of the flavin-dependent monooxygenase AacuC, the isomerase AacuP, and the short chain dehydrogenase/reductase AacuF or AacuD. AacuF and AacuD should accept the same compound as a substrate but perform the ketoreduction with a different stereoselectivity, thus yielding blennolides B and A, respectively. In the final step of the biosynthesis, the cytochrome P450 monooxygenase AacuE accepts blennolide B and/or blennolide A to conduct the dimerization reaction to furnish the tetrahydroxanthone dimers, secalonic acids D, B, and F. This chain is Short-chain dehydrogenase/reductase AacuF, found in Aspergillus aculeatus (strain ATCC 16872 / CBS 172.66 / WB 5094).